Reading from the N-terminus, the 882-residue chain is Bifunctional heparan sulfate N-deacetylase/N-sulfotransferase 1 (882 aa).

At 1–17 the chain is on the cytoplasmic side; the sequence is MPALACLRRLCRHLSPQ. The sufficient for localization to Golgi membrane stretch occupies residues 1–169; that stretch reads MPALACLRRL…VAYGVGIIGF (169 aa). The chain crosses the membrane as a helical; Signal-anchor for type II membrane protein span at residues 18 to 38; it reads AVLFLLFVFCLFSVFVSAYYL. Over 39-882 the chain is Lumenal; sequence YGWNRGLEPS…WLREDLQNTR (844 aa). The segment at 40–598 is heparan sulfate N-deacetylase 1; that stretch reads GWNRGLEPSA…KRHKDIWSKE (559 aa). N-linked (GlcNAc...) asparagine glycosylation is found at N231, N351, and N401. A heparan sulfate N-sulfotransferase 1 region spans residues 599–882; the sequence is KTCDRFPKLL…WLREDLQNTR (284 aa). K614 serves as the catalytic For sulfotransferase activity. 614-618 contacts adenosine 3',5'-bisphosphate; sequence KTGTT. A glycan (N-linked (GlcNAc...) asparagine) is linked at N667. S712 and W817 together coordinate adenosine 3',5'-bisphosphate. An intrachain disulfide couples C818 to C828. 833-837 lines the adenosine 3',5'-bisphosphate pocket; sequence KGRKY.

This sequence belongs to the sulfotransferase 1 family. NDST subfamily. In terms of assembly, monomer. Interacts with heparan sulfate co-polymerase subunits EXT1 and EXT2. As to expression, widely expressed in adult and throughout development.

The protein resides in the golgi apparatus membrane. It is found in the golgi apparatus. Its subcellular location is the trans-Golgi network membrane. The protein localises to the cis-Golgi network membrane. It carries out the reaction N-acetyl-alpha-D-glucosaminyl-[heparan sulfate](n) + H2O = alpha-D-glucosaminyl-[heparan sulfate](n) + acetate. The enzyme catalyses alpha-D-glucosaminyl-[heparan sulfate](n) + 3'-phosphoadenylyl sulfate = N-sulfo-alpha-D-glucosaminyl-[heparan sulfate](n) + adenosine 3',5'-bisphosphate + 2 H(+). Its pathway is glycan metabolism; heparan sulfate biosynthesis. It functions in the pathway glycan metabolism; heparin biosynthesis. Inhibited by long N-sulfated sequences (more than 6 sugar residues) accumulating in its substrates heparan sulfate, and heparin. Functionally, essential bifunctional enzyme that catalyzes both the N-deacetylation and the N-sulfation of glucosamine (GlcNAc) of the glycosaminoglycan in heparan sulfate. Modifies the GlcNAc-GlcA disaccharide repeating sugar backbone to make N-sulfated heparosan, a prerequisite substrate for later modifications in heparin biosynthesis. Plays a role in determining the extent and pattern of sulfation of heparan sulfate. Participates in biosynthesis of heparan sulfate that can ultimately serve as L-selectin ligands, thereby playing a role in inflammatory response. Required for the exosomal release of SDCBP, CD63 and syndecan. This chain is Bifunctional heparan sulfate N-deacetylase/N-sulfotransferase 1, found in Mus musculus (Mouse).